We begin with the raw amino-acid sequence, 647 residues long: Exoribonuclease 2 (647 aa).

An RNB domain is found at 191–517 (REDLCALPFV…VNHRLLKALI (327 aa)). Residues 563–645 (PTPFNAEIID…DTRSLIARPF (83 aa)) enclose the S1 motif domain.

The protein belongs to the RNR ribonuclease family. RNase II subfamily.

It is found in the cytoplasm. It carries out the reaction Exonucleolytic cleavage in the 3'- to 5'-direction to yield nucleoside 5'-phosphates.. In terms of biological role, involved in mRNA degradation. Hydrolyzes single-stranded polyribonucleotides processively in the 3' to 5' direction. This is Exoribonuclease 2 from Edwardsiella piscicida.